The sequence spans 430 residues: Adenylosuccinate synthetase (430 aa).

GTP is bound by residues 12 to 18 (GDEGKGK) and 40 to 42 (GHT). Residue Asp-13 is the Proton acceptor of the active site. Positions 13 and 40 each coordinate Mg(2+). Residues 13–16 (DEGK), 38–41 (NAGH), Thr-130, Arg-144, Gln-224, Thr-239, and Arg-303 each bind IMP. His-41 serves as the catalytic Proton donor. 299–305 (TTTGRKR) provides a ligand contact to substrate. GTP contacts are provided by residues Arg-305, 331-333 (KLD), and 413-415 (STS).

It belongs to the adenylosuccinate synthetase family. Homodimer. Mg(2+) serves as cofactor.

The protein localises to the cytoplasm. The enzyme catalyses IMP + L-aspartate + GTP = N(6)-(1,2-dicarboxyethyl)-AMP + GDP + phosphate + 2 H(+). Its pathway is purine metabolism; AMP biosynthesis via de novo pathway; AMP from IMP: step 1/2. Its function is as follows. Plays an important role in the de novo pathway of purine nucleotide biosynthesis. Catalyzes the first committed step in the biosynthesis of AMP from IMP. The polypeptide is Adenylosuccinate synthetase (Ruegeria pomeroyi (strain ATCC 700808 / DSM 15171 / DSS-3) (Silicibacter pomeroyi)).